We begin with the raw amino-acid sequence, 431 residues long: Hemagglutinin-esterase (431 aa).

The signal sequence occupies residues 1 to 21 (MARTDAMAPRTLLLVLSLGYA). The segment at 11–131 (TLLLVLSLGY…DNNRWMGNKA (121 aa)) is esterase domain 1. At 22-399 (FGFNEPLNVV…PVCMYDPLPV (378 aa)) the chain is on the virion surface side. Ser44 serves as the catalytic Nucleophile. Cysteines 48 and 69 form a disulfide. Asn53, Asn93, Asn151, Asn157, Asn199, Asn244, Asn248, and Asn309 each carry an N-linked (GlcNAc...) asparagine; by host glycan. A disulfide bond links Cys117 and Cys166. Residues 132 to 274 (RFYTQLYQKM…GNYISISNEL (143 aa)) are receptor binding. 2 cysteine pairs are disulfide-bonded: Cys205–Cys284 and Cys213–Cys257. Residues 275–387 (LLTVPSKAIC…HCPTAANIVF (113 aa)) are esterase domain 2. Cys315 and Cys320 are disulfide-bonded. Asn324 carries an N-linked (GlcNAc...) asparagine; by host glycan. Active-site charge relay system residues include Asp334 and His337. N-linked (GlcNAc...) asparagine; by host glycosylation is found at Asn352 and Asn366. Cys355 and Cys379 are joined by a disulfide. Residues 400–420 (ILLGVLLGIAVLIIVFLMFYF) form a helical membrane-spanning segment. Topologically, residues 421–431 (MTDSGVRLHEA) are intravirion.

This sequence belongs to the influenza type C/coronaviruses hemagglutinin-esterase family. In terms of assembly, homodimer; disulfide-linked. Forms a complex with the M protein in the pre-Golgi. Associates then with S-M complex to form a ternary complex S-M-HE. In terms of processing, N-glycosylated in the host RER.

The protein localises to the virion membrane. The protein resides in the host cell membrane. The catalysed reaction is N-acetyl-9-O-acetylneuraminate + H2O = N-acetylneuraminate + acetate + H(+). It catalyses the reaction N-acetyl-4-O-acetylneuraminate + H2O = N-acetylneuraminate + acetate + H(+). Its function is as follows. Structural protein that makes short spikes at the surface of the virus. Contains receptor binding and receptor-destroying activities. Mediates de-O-acetylation of N-acetyl-4-O-acetylneuraminic acid, which is probably the receptor determinant recognized by the virus on the surface of erythrocytes and susceptible cells. This receptor-destroying activity is important for virus release as it probably helps preventing self-aggregation and ensures the efficient spread of the progeny virus from cell to cell. May serve as a secondary viral attachment protein for initiating infection, the spike protein being the major one. May become a target for both the humoral and the cellular branches of the immune system. This is Hemagglutinin-esterase from Murine coronavirus (strain DVIM) (MHV-DVIM).